The following is a 267-amino-acid chain: Phosphate import ATP-binding protein PstB 2 (267 aa).

Positions 21 to 262 (LTTKDLHVYY…AKCQSTSDYV (242 aa)) constitute an ABC transporter domain. 53-60 (GPSGCGKS) contributes to the ATP binding site.

The protein belongs to the ABC transporter superfamily. Phosphate importer (TC 3.A.1.7) family. As to quaternary structure, the complex is composed of two ATP-binding proteins (PstB), two transmembrane proteins (PstC and PstA) and a solute-binding protein (PstS).

It localises to the cell membrane. The enzyme catalyses phosphate(out) + ATP + H2O = ADP + 2 phosphate(in) + H(+). Functionally, part of the ABC transporter complex PstSACB involved in phosphate import. Responsible for energy coupling to the transport system. The polypeptide is Phosphate import ATP-binding protein PstB 2 (Streptococcus agalactiae serotype Ia (strain ATCC 27591 / A909 / CDC SS700)).